The chain runs to 481 residues: MSYIKKLRARLDSGEISAVELTKEYLAKIKEQDKRINSVITLCEAEALKEAEDADAIISAGKQGLLTGIPILHKDLFCTKGIRTTAASKMLDNFVAPYDSTVTKNCKDQGMVTLGKLNMDEFAMGSTNEHSYYGAVSNPWDLERVPGGSSGGSAAAVAAGFAPISTGSDTGGSVRQPASFCGLTAMKPSYGSTSRFGMVAFASSFDQAGIFAHYAEDVAIMLDAIAGECEFDSTCVGVKENHFTQDLEKDISGKVIGVDESLIKDLPEQIQEAVLKTLDNFKKLGAEIKSVKVPDLKEALSTYYIITPAEAAANLARYDGIRYGYRNPEARDLDELYRKSRTDGFGAEVKRRIMIGNYVLASSQYDSYYNKAQQLRKVMTDQINQIFTQVDVIFMPASPSEAFKKGDKLDPVSAYLSDIYTIPANISGLPAIAFPIGFANNLPVGGQLMAKAFNDNILTQMVVQYQKHYGIEEFILEQARI.

Active-site charge relay system residues include lysine 74 and serine 149. The active-site Acyl-ester intermediate is the serine 173.

This sequence belongs to the amidase family. GatA subfamily. Heterotrimer of A, B and C subunits.

The catalysed reaction is L-glutamyl-tRNA(Gln) + L-glutamine + ATP + H2O = L-glutaminyl-tRNA(Gln) + L-glutamate + ADP + phosphate + H(+). Allows the formation of correctly charged Gln-tRNA(Gln) through the transamidation of misacylated Glu-tRNA(Gln) in organisms which lack glutaminyl-tRNA synthetase. The reaction takes place in the presence of glutamine and ATP through an activated gamma-phospho-Glu-tRNA(Gln). This is Glutamyl-tRNA(Gln) amidotransferase subunit A from Francisella tularensis subsp. novicida (strain U112).